The sequence spans 139 residues: NADPH-dependent 7-cyano-7-deazaguanine reductase (139 aa).

Residue Cys34 is the Thioimide intermediate of the active site. Asp41 serves as the catalytic Proton donor. Residues 56 to 58 and 75 to 76 each bind substrate; these read IEL and HE.

The protein belongs to the GTP cyclohydrolase I family. QueF type 1 subfamily.

The protein localises to the cytoplasm. It carries out the reaction 7-aminomethyl-7-carbaguanine + 2 NADP(+) = 7-cyano-7-deazaguanine + 2 NADPH + 3 H(+). The protein operates within tRNA modification; tRNA-queuosine biosynthesis. Catalyzes the NADPH-dependent reduction of 7-cyano-7-deazaguanine (preQ0) to 7-aminomethyl-7-deazaguanine (preQ1). This chain is NADPH-dependent 7-cyano-7-deazaguanine reductase, found in Nitrosomonas europaea (strain ATCC 19718 / CIP 103999 / KCTC 2705 / NBRC 14298).